A 340-amino-acid chain; its full sequence is Glycerol-3-phosphate dehydrogenase [NAD(P)+] (340 aa).

Residues Ser-14, Phe-15, Arg-35, and Lys-108 each contribute to the NADPH site. Positions 108 and 136 each coordinate sn-glycerol 3-phosphate. Ala-140 provides a ligand contact to NADPH. Residues Lys-191, Asp-244, Ser-254, Arg-255, and Asn-256 each coordinate sn-glycerol 3-phosphate. Lys-191 (proton acceptor) is an active-site residue. Arg-255 is a binding site for NADPH. 2 residues coordinate NADPH: Val-279 and Glu-281.

This sequence belongs to the NAD-dependent glycerol-3-phosphate dehydrogenase family.

It is found in the cytoplasm. It carries out the reaction sn-glycerol 3-phosphate + NAD(+) = dihydroxyacetone phosphate + NADH + H(+). The enzyme catalyses sn-glycerol 3-phosphate + NADP(+) = dihydroxyacetone phosphate + NADPH + H(+). The protein operates within membrane lipid metabolism; glycerophospholipid metabolism. Catalyzes the reduction of the glycolytic intermediate dihydroxyacetone phosphate (DHAP) to sn-glycerol 3-phosphate (G3P), the key precursor for phospholipid synthesis. The chain is Glycerol-3-phosphate dehydrogenase [NAD(P)+] from Ectopseudomonas mendocina (strain ymp) (Pseudomonas mendocina).